A 137-amino-acid chain; its full sequence is uncharacterized protein (137 aa).

2 helical membrane passes run 36–52 (LAPP…PFVL) and 113–129 (FYGY…IFCF).

The protein localises to the membrane. This is an uncharacterized protein from Saccharomyces cerevisiae (strain ATCC 204508 / S288c) (Baker's yeast).